A 331-amino-acid polypeptide reads, in one-letter code: Gamma-parvin (331 aa).

An N-acetylmethionine modification is found at M1. The segment at 18-38 (QPTEEELPRGGKKKYLSPNSK) is disordered. 2 consecutive Calponin-homology (CH) domains span residues 44 to 151 (EELQ…KRFQ) and 210 to 317 (HAVQ…QKHS).

The protein belongs to the parvin family. Interacts with ILK; the interaction promotes the establishment of cell polarity required for leukocyte migration. Interacts with ARHGEF6; the guanine nucleotide exchange factor activity of ARHGEF6 is essential for the PARVG-induced enhancement of cell spreading. As to expression, expressed strongly in spleen and testis, moderately in lung and weakly in brain and heart.

Its subcellular location is the cell junction. It localises to the focal adhesion. It is found in the cell membrane. The protein resides in the cytoplasm. The protein localises to the cytoskeleton. Functionally, plays a role with ILK in promoting the cell adhesion and spreading of leukocytes. This chain is Gamma-parvin (Parvg), found in Mus musculus (Mouse).